Reading from the N-terminus, the 505-residue chain is Putative ribose/galactose/methyl galactoside import ATP-binding protein 1 (505 aa).

2 consecutive ABC transporter domains span residues 10 to 245 and 256 to 501; these read LRLE…VGRS and RPTD…SGYG. 42–49 serves as a coordination point for ATP; the sequence is GENGAGKS.

Belongs to the ABC transporter superfamily. Carbohydrate importer 2 (CUT2) (TC 3.A.1.2) family.

The protein resides in the cell inner membrane. The enzyme catalyses D-ribose(out) + ATP + H2O = D-ribose(in) + ADP + phosphate + H(+). It catalyses the reaction D-galactose(out) + ATP + H2O = D-galactose(in) + ADP + phosphate + H(+). Its function is as follows. Part of an ABC transporter complex involved in carbohydrate import. Could be involved in ribose, galactose and/or methyl galactoside import. Responsible for energy coupling to the transport system. This Agrobacterium fabrum (strain C58 / ATCC 33970) (Agrobacterium tumefaciens (strain C58)) protein is Putative ribose/galactose/methyl galactoside import ATP-binding protein 1.